Here is a 174-residue protein sequence, read N- to C-terminus: Terminase small subunit (174 aa).

This sequence belongs to the skunalikevirus terminase small subunit family.

Probable terminase small subunit. The terminase lies at a unique vertex of the procapsid and is composed of two subunits, a small terminase subunit and a large terminase subunit. Both terminase subunits heterooligomerize and are docked on the portal protein to form the packaging machine. Once the capsid is packaged with the DNA, the terminase complex is substituted by the connector proteins gp15. The protein is Terminase small subunit of Lactococcus phage p2 (Lactococcus lactis bacteriophage p2).